The chain runs to 654 residues: tRNA 5-methylaminomethyl-2-thiouridine biosynthesis bifunctional protein MnmC (654 aa).

Positions 1-235 (MSDFQHAQLD…KREMLGGTYQ (235 aa)) are tRNA (mnm(5)s(2)U34)-methyltransferase. Positions 261 to 654 (VGGGLAGCAS…LRDLVRGQRG (394 aa)) are FAD-dependent cmnm(5)s(2)U34 oxidoreductase.

This sequence in the N-terminal section; belongs to the methyltransferase superfamily. tRNA (mnm(5)s(2)U34)-methyltransferase family. It in the C-terminal section; belongs to the DAO family. Requires FAD as cofactor.

Its subcellular location is the cytoplasm. The catalysed reaction is 5-aminomethyl-2-thiouridine(34) in tRNA + S-adenosyl-L-methionine = 5-methylaminomethyl-2-thiouridine(34) in tRNA + S-adenosyl-L-homocysteine + H(+). Catalyzes the last two steps in the biosynthesis of 5-methylaminomethyl-2-thiouridine (mnm(5)s(2)U) at the wobble position (U34) in tRNA. Catalyzes the FAD-dependent demodification of cmnm(5)s(2)U34 to nm(5)s(2)U34, followed by the transfer of a methyl group from S-adenosyl-L-methionine to nm(5)s(2)U34, to form mnm(5)s(2)U34. The sequence is that of tRNA 5-methylaminomethyl-2-thiouridine biosynthesis bifunctional protein MnmC from Pseudomonas aeruginosa (strain UCBPP-PA14).